The following is a 100-amino-acid chain: Small ribosomal subunit protein uS14c (100 aa).

This sequence belongs to the universal ribosomal protein uS14 family. As to quaternary structure, part of the 30S ribosomal subunit.

Its subcellular location is the plastid. The protein localises to the chloroplast. In terms of biological role, binds 16S rRNA, required for the assembly of 30S particles. The polypeptide is Small ribosomal subunit protein uS14c (Phaeodactylum tricornutum (strain CCAP 1055/1)).